A 400-amino-acid chain; its full sequence is CinA-like protein (400 aa).

It belongs to the CinA family.

The protein is CinA-like protein of Escherichia coli (strain 55989 / EAEC).